Consider the following 191-residue polypeptide: Protein Ves (191 aa).

It belongs to the Ves family.

The sequence is that of Protein Ves from Shigella flexneri serotype 5b (strain 8401).